The sequence spans 447 residues: uncharacterized protein (447 aa).

The FAD-binding PCMH-type domain maps to 29–201 (VDVYPLVFVF…TQYTFKVHRA (173 aa)).

It belongs to the oxygen-dependent FAD-linked oxidoreductase family. FAD is required as a cofactor.

The protein localises to the spore coat. This is an uncharacterized protein from Bacillus subtilis (strain 168).